A 490-amino-acid chain; its full sequence is Protein U94 (490 aa).

One can recognise a PV NS1-Nuc domain in the interval 1-210 (MFSIINPSDD…SHFNKKPNVK (210 aa)). Residues 312–463 (DPILAGTILY…IPRNFPVIQK (152 aa)) enclose the SF3 helicase domain. 338–345 (GPPGCGKS) is a binding site for ATP.

It localises to the host nucleus. The chain is Protein U94 (U94) from Human herpesvirus 6B (HHV-6 variant B).